The following is a 289-amino-acid chain: Light-independent protochlorophyllide reductase iron-sulfur ATP-binding protein (289 aa).

Residues 10 to 15 and Lys-39 contribute to the ATP site; that span reads GIGKST. Ser-14 provides a ligand contact to Mg(2+). Residues Cys-95 and Cys-129 each coordinate [4Fe-4S] cluster. 180 to 181 serves as a coordination point for ATP; the sequence is NR.

Belongs to the NifH/BchL/ChlL family. Homodimer. Protochlorophyllide reductase is composed of three subunits; ChlL, ChlN and ChlB. [4Fe-4S] cluster is required as a cofactor.

It localises to the plastid. It is found in the chloroplast. It catalyses the reaction chlorophyllide a + oxidized 2[4Fe-4S]-[ferredoxin] + 2 ADP + 2 phosphate = protochlorophyllide a + reduced 2[4Fe-4S]-[ferredoxin] + 2 ATP + 2 H2O. It participates in porphyrin-containing compound metabolism; chlorophyll biosynthesis (light-independent). In terms of biological role, component of the dark-operative protochlorophyllide reductase (DPOR) that uses Mg-ATP and reduced ferredoxin to reduce ring D of protochlorophyllide (Pchlide) to form chlorophyllide a (Chlide). This reaction is light-independent. The L component serves as a unique electron donor to the NB-component of the complex, and binds Mg-ATP. This chain is Light-independent protochlorophyllide reductase iron-sulfur ATP-binding protein, found in Tetradesmus obliquus (Green alga).